A 447-amino-acid chain; its full sequence is Beclin-2 (447 aa).

Residues glutamate 169–tyrosine 228 are a coiled coil. The required for homodimer formation stretch occupies residues glutamate 186 to glutamine 256.

Belongs to the beclin family. In terms of assembly, homodimer (via coiled-coil domain). Interacts (via coiled-coil domain) with ATG14 (via coiled-coil domain); this interaction is tighter than BECN2 self-association. Interacts with AMBRA1, UVRAG and PIK3C3/VPS34; these interactions are not disrupted by starvation. Does not interact with RUBCN. Interacts (via N-terminus) with GPRASP1/GASP1; the interaction is direct. Expressed in brain, skeletal muscle, placenta, thymus and uterus. Expressed at a lower level in liver, testis, stomach, and 17-day-old embryos.

The protein resides in the cytoplasm. In terms of biological role, involved in 2 distinct lysosomal degradation pathways: acts as a regulator of autophagy and as a regulator of G-protein coupled receptors turnover. Regulates degradation in lysosomes of a variety of G-protein coupled receptors via its interaction with GPRASP1/GASP1. This is Beclin-2 from Mus musculus (Mouse).